Reading from the N-terminus, the 42-residue chain is MTENIISWNVANWVTVILMALAGYAVLALAAKVINNRAQEPA.

The chain crosses the membrane as a helical span at residues 10–30 (VANWVTVILMALAGYAVLALA).

The protein localises to the host membrane. This is an uncharacterized protein from Acinetobacter calcoaceticus (Arthrobacter siderocapsulatus).